The primary structure comprises 547 residues: Dihydrolipoyllysine-residue acetyltransferase component of pyruvate dehydrogenase complex (547 aa).

In terms of domain architecture, Lipoyl-binding 1 spans 2–75 (SELIRVPDIG…KEGDEILELE (74 aa)). K41 is subject to N6-lipoyllysine. The tract at residues 75–117 (EVEGGEQPAEAKAEAAPAQPEAPKAEAPAPAPSESKPAAPAAA) is disordered. Low complexity predominate over residues 80-117 (EQPAEAKAEAAPAQPEAPKAEAPAPAPSESKPAAPAAA). Residues 119 to 193 (VQDIKVPDIG…GTGDLILKLK (75 aa)) form the Lipoyl-binding 2 domain. The residue at position 159 (K159) is an N6-lipoyllysine. The segment covering 202 to 231 (EEQPAAAPAQAAAPAAEQKPAAAAPAPAKA) has biased composition (low complexity). Residues 202–248 (EEQPAAAPAQAAAPAAEQKPAAAAPAPAKADTPAPVGAPSRDGAKVH) are disordered. The Peripheral subunit-binding (PSBD) domain occupies 248–285 (HAGPAVRMLAREFGVELSEVKASGPKGRILKEDVQVFV). H520 is a catalytic residue.

It belongs to the 2-oxoacid dehydrogenase family. In terms of assembly, forms a 24-polypeptide structural core with octahedral symmetry. It depends on (R)-lipoate as a cofactor.

The catalysed reaction is N(6)-[(R)-dihydrolipoyl]-L-lysyl-[protein] + acetyl-CoA = N(6)-[(R)-S(8)-acetyldihydrolipoyl]-L-lysyl-[protein] + CoA. In terms of biological role, the pyruvate dehydrogenase complex catalyzes the overall conversion of pyruvate to acetyl-CoA and CO(2). It contains multiple copies of three enzymatic components: pyruvate dehydrogenase (E1), dihydrolipoamide acetyltransferase (E2) and lipoamide dehydrogenase (E3). This is Dihydrolipoyllysine-residue acetyltransferase component of pyruvate dehydrogenase complex (aceF) from Pseudomonas aeruginosa (strain ATCC 15692 / DSM 22644 / CIP 104116 / JCM 14847 / LMG 12228 / 1C / PRS 101 / PAO1).